Consider the following 264-residue polypeptide: Hydroxyethylthiazole kinase (264 aa).

Residue methionine 40 coordinates substrate. ATP-binding residues include lysine 116 and threonine 161. Glycine 188 is a substrate binding site.

It belongs to the Thz kinase family. Mg(2+) is required as a cofactor.

It carries out the reaction 5-(2-hydroxyethyl)-4-methylthiazole + ATP = 4-methyl-5-(2-phosphooxyethyl)-thiazole + ADP + H(+). The protein operates within cofactor biosynthesis; thiamine diphosphate biosynthesis; 4-methyl-5-(2-phosphoethyl)-thiazole from 5-(2-hydroxyethyl)-4-methylthiazole: step 1/1. Catalyzes the phosphorylation of the hydroxyl group of 4-methyl-5-beta-hydroxyethylthiazole (THZ). This is Hydroxyethylthiazole kinase from Staphylococcus carnosus (strain TM300).